A 229-amino-acid chain; its full sequence is Cytochrome c oxidase subunit 2 (229 aa).

The Mitochondrial intermembrane portion of the chain corresponds to 1–26 (MSTWANLGLQDSASPLMEQLIFFHDH). The helical transmembrane segment at 27–48 (ALLILVMITVLVGYLMFMLFFN) threads the bilayer. The Mitochondrial matrix portion of the chain corresponds to 49–62 (SYVNRFLLHGQLIE). Residues 63–82 (MIWTILPAIILLFIAMPSLR) traverse the membrane as a helical segment. Topologically, residues 83–229 (LLYLLDEINE…IKWISSTVNS (147 aa)) are mitochondrial intermembrane. Residues His-161, Cys-196, Glu-198, Cys-200, His-204, and Met-207 each coordinate Cu cation. Glu-198 contacts Mg(2+).

Belongs to the cytochrome c oxidase subunit 2 family. In terms of assembly, component of the cytochrome c oxidase (complex IV, CIV), a multisubunit enzyme composed of a catalytic core of 3 subunits and several supernumerary subunits. The complex exists as a monomer or a dimer and forms supercomplexes (SCs) in the inner mitochondrial membrane with ubiquinol-cytochrome c oxidoreductase (cytochrome b-c1 complex, complex III, CIII). The cofactor is Cu cation.

The protein resides in the mitochondrion inner membrane. It carries out the reaction 4 Fe(II)-[cytochrome c] + O2 + 8 H(+)(in) = 4 Fe(III)-[cytochrome c] + 2 H2O + 4 H(+)(out). Functionally, component of the cytochrome c oxidase, the last enzyme in the mitochondrial electron transport chain which drives oxidative phosphorylation. The respiratory chain contains 3 multisubunit complexes succinate dehydrogenase (complex II, CII), ubiquinol-cytochrome c oxidoreductase (cytochrome b-c1 complex, complex III, CIII) and cytochrome c oxidase (complex IV, CIV), that cooperate to transfer electrons derived from NADH and succinate to molecular oxygen, creating an electrochemical gradient over the inner membrane that drives transmembrane transport and the ATP synthase. Cytochrome c oxidase is the component of the respiratory chain that catalyzes the reduction of oxygen to water. Electrons originating from reduced cytochrome c in the intermembrane space (IMS) are transferred via the dinuclear copper A center (CU(A)) of subunit 2 and heme A of subunit 1 to the active site in subunit 1, a binuclear center (BNC) formed by heme A3 and copper B (CU(B)). The BNC reduces molecular oxygen to 2 water molecules using 4 electrons from cytochrome c in the IMS and 4 protons from the mitochondrial matrix. In Drosophila lowei (Fruit fly), this protein is Cytochrome c oxidase subunit 2 (mt:CoII).